Reading from the N-terminus, the 569-residue chain is Formate hydrogenlyase subunit 5 (569 aa).

Positions 538–569 (MTVVDVRKKKSKVVPYKELERYSIERKNSPLK) are excised as a propeptide.

The protein belongs to the complex I 49 kDa subunit family. In terms of assembly, FHL comprises of a formate dehydrogenase, unidentified electron carriers and a hydrogenase (isoenzyme 3). In this non-energy conserving pathway molecular hydrogen and carbodioxide from formate are released. [4Fe-4S] cluster serves as cofactor. Ni(2+) is required as a cofactor.

This chain is Formate hydrogenlyase subunit 5 (hycE), found in Escherichia coli (strain K12).